The chain runs to 38 residues: Large ribosomal subunit protein bL36c (38 aa).

It belongs to the bacterial ribosomal protein bL36 family.

The protein resides in the plastid. It is found in the chloroplast. This chain is Large ribosomal subunit protein bL36c (rpl36), found in Mesostigma viride (Green alga).